A 488-amino-acid chain; its full sequence is Diacylglycerol kinase 3 (488 aa).

The interval 1–24 (MDSPVSKTDASKEKFVASRPSTAD) is disordered. One can recognise a DAGKc domain in the interval 87 to 245 (APHAPMVVFI…SWKILVSMPS (159 aa)).

It belongs to the eukaryotic diacylglycerol kinase family. As to quaternary structure, monomer.

The catalysed reaction is a 1,2-diacyl-sn-glycerol + ATP = a 1,2-diacyl-sn-glycero-3-phosphate + ADP + H(+). Its function is as follows. Phosphorylates the second messenger diacylglycerol (DAG) to generate phosphatidic acid (PA), another important signaling molecule. PA is required for plant development and responses to abiotic stress and pathogen attack. May be involved in the accumulation of PA during cold stress. The polypeptide is Diacylglycerol kinase 3 (DGK3) (Arabidopsis thaliana (Mouse-ear cress)).